Here is a 232-residue protein sequence, read N- to C-terminus: 5'-methylthioadenosine/S-adenosylhomocysteine nucleosidase (232 aa).

Glutamate 14 (proton acceptor) is an active-site residue. Substrate-binding positions include glycine 80, valine 154, and 175–176 (ME). The Proton donor role is filled by aspartate 199.

This sequence belongs to the PNP/UDP phosphorylase family. MtnN subfamily.

It carries out the reaction S-adenosyl-L-homocysteine + H2O = S-(5-deoxy-D-ribos-5-yl)-L-homocysteine + adenine. It catalyses the reaction S-methyl-5'-thioadenosine + H2O = 5-(methylsulfanyl)-D-ribose + adenine. The catalysed reaction is 5'-deoxyadenosine + H2O = 5-deoxy-D-ribose + adenine. It participates in amino-acid biosynthesis; L-methionine biosynthesis via salvage pathway; S-methyl-5-thio-alpha-D-ribose 1-phosphate from S-methyl-5'-thioadenosine (hydrolase route): step 1/2. Functionally, catalyzes the irreversible cleavage of the glycosidic bond in both 5'-methylthioadenosine (MTA) and S-adenosylhomocysteine (SAH/AdoHcy) to adenine and the corresponding thioribose, 5'-methylthioribose and S-ribosylhomocysteine, respectively. Also cleaves 5'-deoxyadenosine, a toxic by-product of radical S-adenosylmethionine (SAM) enzymes, into 5-deoxyribose and adenine. The sequence is that of 5'-methylthioadenosine/S-adenosylhomocysteine nucleosidase from Actinobacillus pleuropneumoniae serotype 3 (strain JL03).